The primary structure comprises 117 residues: UPF0321 protein PJ695.01c (117 aa).

A signal peptide spans M1–A17. N-linked (GlcNAc...) asparagine glycans are attached at residues N39, N65, N71, and N104.

Belongs to the UPF0321 family.

The protein is UPF0321 protein PJ695.01c of Schizosaccharomyces pombe (strain 972 / ATCC 24843) (Fission yeast).